Reading from the N-terminus, the 1297-residue chain is Phosphoribosylformylglycinamidine synthase (1297 aa).

The disordered stretch occupies residues 304–323; the sequence is PFPGAATGSGGEIRDEGATG. ATP is bound by residues 307–318 and A678; that span reads GAATGSGGEIRD. The Mg(2+) site is built by D679, E718, N722, and D886. Residue S888 participates in ATP binding. Residues 1043–1297 form the Glutamine amidotransferase type-1 domain; sequence RIAILREQGV…LFQNARVALG (255 aa). Residue C1137 is the Nucleophile of the active site. Active-site residues include H1262 and E1264.

The protein in the N-terminal section; belongs to the FGAMS family. As to quaternary structure, monomer.

It localises to the cytoplasm. The catalysed reaction is N(2)-formyl-N(1)-(5-phospho-beta-D-ribosyl)glycinamide + L-glutamine + ATP + H2O = 2-formamido-N(1)-(5-O-phospho-beta-D-ribosyl)acetamidine + L-glutamate + ADP + phosphate + H(+). It participates in purine metabolism; IMP biosynthesis via de novo pathway; 5-amino-1-(5-phospho-D-ribosyl)imidazole from N(2)-formyl-N(1)-(5-phospho-D-ribosyl)glycinamide: step 1/2. In terms of biological role, phosphoribosylformylglycinamidine synthase involved in the purines biosynthetic pathway. Catalyzes the ATP-dependent conversion of formylglycinamide ribonucleotide (FGAR) and glutamine to yield formylglycinamidine ribonucleotide (FGAM) and glutamate. The chain is Phosphoribosylformylglycinamidine synthase from Histophilus somni (strain 129Pt) (Haemophilus somnus).